A 243-amino-acid chain; its full sequence is Protein unc-119 homolog B (243 aa).

Over residues 1–21 the composition is skewed to polar residues; sequence MNSQSSRNETAATAVNGSDSA. The interval 1 to 49 is disordered; it reads MNSQSSRNETAATAVNGSDSAAASRDHKSGGGVLKRLKSRRNQVDRRPV. Position 134 (Tyr-134) interacts with tetradecanoate.

It belongs to the PDE6D/unc-119 family. As to expression, detected in embryo. Detected in larvae four days after fertilization, in retina and neural tissues (at protein level). Detected in embryos at the sphere stage, during gastrulation, somitogenesis and in swimming larvae, both within and outside of the developing nervous system. Detected in adults.

It is found in the cell projection. The protein resides in the cilium. Functionally, myristoyl-binding protein that acts as a cargo adapter: specifically binds the myristoyl moiety of a subset of N-terminally myristoylated proteins and is required for their localization. Plays a key role in localization of proteins to the primary cilium membrane. This is Protein unc-119 homolog B (unc119b) from Danio rerio (Zebrafish).